The primary structure comprises 625 residues: Baeyer-Villiger monooxygenase ATR8 (625 aa).

FAD contacts are provided by residues aspartate 112, 120–123 (TWYW), aspartate 132, and tyrosine 138. An NADP(+)-binding site is contributed by 130–132 (QCD). NADP(+) contacts are provided by residues 266-272 (TGATAIQ), 289-290 (RT), and 405-406 (KR).

Belongs to the FAD-binding monooxygenase family. FAD is required as a cofactor.

It participates in mycotoxin biosynthesis. Its function is as follows. Baeyer-Villiger monooxygenase; part of the core atranone cluster (CAC) which products are predicted to catalyze most or all steps of mycotoxin atranone synthesis, starting from geranylgeranyl pyrophosphate (GGPP). The initial cyclization of GGPP to dolabellane is probably performed by the terpene cyclase ATR13. The Baeyer-Villiger oxidation near the end of the atranone synthesis, which converts atranones D and E to atranones F and G is predicted to be catalyzed by the monooxygenase ATR8. Of the CAC's other predicted gene products, the reducing PKS ATR6 might synthesize a polyketide chain. This polyketide is probably transferred onto the atranone backbone by the polyketide transferase ATR5. Other predicted CAC products include 4 oxygenases (ATR2, ATR3, ATR4, and ATR14), 3 short-chain reductases (ATR7, ATR9, and ATR10), and a methyltransferase (ATR12). These may all be involved in the various steps of atranone biosynthesis, although their specific roles must await experimental determination. The chain is Baeyer-Villiger monooxygenase ATR8 from Stachybotrys chlorohalonatus (strain IBT 40285).